A 323-amino-acid polypeptide reads, in one-letter code: Flavone synthase cfoJ (323 aa).

FMN is required as a cofactor.

It participates in secondary metabolite biosynthesis; flavonoid biosynthesis. In terms of biological role, FMN-dependent oxidoreductase; part of the gene cluster that mediates the biosynthesis of chlorflavonin, a fungal flavonoid with acetolactate synthase inhibitory activity. Within the pathway, cfoJ acts as a flavone synthase (FNS) and catalyzes the formation of a double bond between C2 and C3, converting the flavanone into a flavone. The pathway begins with the PKS-NRPS hybrid synthetase cfoA that uses benzoic acid or p-hydroxybenzoic acid as a starter unit with four rounds of chain elongation using malonyl-CoA to form the chalcone skeleton. Then, a new type of chalcone isomerase, cfoK, catalyzes the conversion of the chalcone into a flavanone by a histidine-mediated oxa-Michael addition mechanism. The desaturation of flavanone to flavone is catalyzed by a new type of flavone synthase, the flavin mononucleotide (FMN)-dependent oxidoreductase cfoJ. Monooxygenases cfoF, cfoG, and P450 cfoH are responsible for the hydroxylation of the flavonoid skeleton at sites C3, C8, and C2', respectively. Like cfoF, the dehydratase cfoI plays also a role in the hydroxylation of position C3. Methyltransferases cfoB, cfoC, and cfoD then catalyze the methylation of C7-OH, C8-OH, and C3-OH, respectively. Finally, the monooxygenase cfoE is responsible for the chlorination of flavonoid at position C3'. In Aspergillus candidus, this protein is Flavone synthase cfoJ.